A 3707-amino-acid chain; its full sequence is MKGSRKGESRAKESKPREPGTRRCAKCGRLDFILKKKMGIKSGFTFWNLVFLLTLSCVKGFIYTCGGTLKGLNGTIESPGFPYGYPNGANCTWVIIAEERNRIQIVFQSFALEEEYDYLSLYDGHPHPTNFRTRLTGFHLPPPVTSTKSVFSLRLTSDFAVSAHGFKVYYEELQSSSCGNPGVPPKGVLYGTRFDVGDKIRYSCVTGYILDGHPQLTCIANSVNTASWDFPVPICRAEDACGGTMRGSSGIISSPGFPNEYHNNADCTWTIVAEPGDTISLIFTDFQMEEKYDYLEIEGSEPPTIWLSGMNIPPPIISNKNWLRLHFVTDSNHRYRGFSAPYQGSSPLTLTASIGELEEHIRTATGAIDVASTPADVTVSSVTAVTSHRLSEEQRVQVRSLSDSGLDPNTPEDQLSPHQADTQSTSRRPRNAEQIERTKELAVVTHRVKKAIDFKSRGFKLFPGKDNSNKFSLLNEGGIKTASNLCPDPGEPENGKRFGSDFSLGSTVQFSCDEDYVLQGAKSITCQRIAEVFAAWSDHRPVCKVKTCGSNLQGPSGTFTSPNFPFQYDSNAQCVWVITAVNTNKVIQINFEEFDLEIGYDTLTIGDGGEVGDPRTVLQVLTGSFVPDLIVSMRSQMWLHLQTDESVGSVGFKVNYKEIEKESCGDPGTPLYGIREGDGFSNRDVLRFECQFGFELIGEKSIVCQENNQWSANIPICIFPCLSNFTAPMGTVLSPDYPEGYGNNLNCIWTIISDPGSRIHLSFNDFDLESQFDFLAVKDGDSPDSPILGTFTGAEVPSHLTSNSHILRLEFQADHSMSGRGFNITYNTFGHNECPDPGIPINARRFGDNFQLGSSISVICEEGFIKTQGTETITCILMDGKVMWSGPIPRCGAPCGGHFSAPSGVILSPGWPGYYKDSLNCEWVIEAEPGHSIKITFERFQTELNYDVLEVHDGPNLLSPLLGSYNGTQVPQFLFSSSNFIYLLFTTDNSRSNNGFKIHYESVTVNTYSCLDPGIPVHGRRYGHDFSIGSTVSFSCDPGYRLSHEEPLLCEKNHWWSHPLPTCDALCGGDVRGPSGTILSPGYPEFYPNSLNCTWTVDVTHGKGVQFNFHTFHLEDHHDYLLITENGSFTQPLARLTGSELPSTINAGLYGNFRAQLRFISDFSISYEGFNITFSEYNLEPCEDPGIPQYGSRVGFSFGVGDTLTFSCSLGYRLEGSSEIICLGGGRRVWSAPLPRCVAECGASATNNEGILLSPNYPLNYENNHECIYSLQVQAGKGINISARTFHLAQGDVLKIYDGKDKTTHLLGAFTGASMRGLTLSSTSNQLWLEFNSDSEGTDEGFQLVYTSFELSHCEDPGIPQFGYKISDQGHFAGSTIIYGCNPGYTLHGSSLLKCMTGERRAWDYPLPSCIAECGGRFKGESSGRILSPGYPFPYDNNLRCMWMIEVDPGNIVSLQFLAFDTEASHDILRVWDGPPENEMLLKEVSGSLIPDGIHSTLNIVTIQFDTDFYISKSGFAIQFSSSVATACRDPGVPMNGTRNGDGREPGDTVVFQCDPGYELQGQERITCIQVENRYFWQPSPPVCIAPCGGNLTGSSGFILSPNFPHPYPHSRDCDWTISVNTDYVISLAFISFSIEPNYDFLYIYDGPDSNSPLIGSFQDSKLPERIESSSNTMHLAFRSDGSVSYTGFHLEYKAKLRESCFDPGNIMNGTRLGMDYKLGSTVTYYCDAGYVLQGYSTLTCIMGDDGRPGWNRVLPSCHAPCGSRSTGSEGTVLSPNYPKNYSVDHNCVYSIAVPKEFVVFGQFVFFQTSLHDVVEVFDGPTQQSPLLSSLSGSHSGESLPLSSGNQITIRFTSVGPITAKGFHFVYQAVPRTSSTQCSSVPEPRFGRRIGNDFAVGSLVLFECNPGYILHGSRAIRCETVPNSLAQWNDSLPTCIVPCGGILTKRKGTILSPGYPEPYDNNLNCVWKITVPEGAGIQVQVVSFATEHNWDSLDFYDGGDNNAPRLGSYSGTTIPHLLNSTSNNLYLNFQSDISVSAAGFHLEYTAIGLDSCPEPQTPSSGIKVGDRYMVGDVVSFQCDQGYSLQGHSHITCMPGPVRRWNYPIPICLAQCGGAMSDFSGVILSPGFPGNYPSSLDCTWTIKLPIGFGVHLQFVNFSTETIHDYLEVRSGSSEISTVIGRLSGPQIPSSLFSTTHETSLYFHSDYSQNKQGFHIVYQAYQLQSCPDPRPFRNGFVIGNDFTVGQTISFECFPGYTLIGNSALTCLHGVSRNWNHPLPRCEALCGGNITAMNGTIYSPGYPDEYPNFQDCFWLVRVPPGNGIYINFTVLQTEPIYDFITVWDGPDQNSPQIGQFSGNTALESVYSTSNQILIKFHSDFTTSGFFVLSYHAYQLRVCQPPPPVPNAEILTEDDEFEIGDIIRYQCLPGFTLVGNAILTCRLGERLQMDGAPPVCQVLCPANELRLDSTGVILSPGYPDSYPNLQMCAWSISVEKGYNISMFVEFFQTEKEFDVLQVYDGPNIQSPVLISLSGDYSAAFNVTSNGHEVFLQWSADHGNNKKGFRIRYIAFYCSTPESPPHGYIISQTGGQLNSVVRWACDRGFRLVGKSSAVCRKSSYGYHSWDAPVPACQAISCGIPKAPTNGGILTTDYLVGTRVTYFCNDGYRLSSKELTTATCQSDGTWSNHNKTPRCVVVTCPSINSFTLDHGRWRIVNGSHYEYKTKVVFSCDPGYHGLGPASIECLPNGTWSWRTERPYCQIISCGELPTPPNGNKIGTQTSYGSTAIFTCDLGFMLVGSAVRECLSSGLWSGSETRCLAGHCGIPELIVNGQVIGENYGYRDTVVYQCNPGFRLIGSSVRICQQDHNWSGQLPSCVPVSCGHPGSPIYGRTSGNGFNFNDVVTFSCNIGYLMQGPTKAQCQANRQWSHPPPVCKVVNCSDPGIPANSKRESKIEHGNFTYGTVVFYDCNPGYFLFGSSVLICQPNGQWDKPLPECIMIDCGHPGIPPNAVLSGEKYTFGSTVHYSCTGKRSLLGQASRTCQLNGHWSGSQPHCSGDTTGTCGDPGTPGHGSRQESDFRTKSTVRFACDTGYILYGSEERTCLSNGSWTGRQPECKAVQCGNPGTTANGKVFRIDGTTFSSSVIYSCLEGYILSGPSVRQCTANGTWSGSLPNCTIISCGDPGIPANGLRYGDDFVVGQNVSYMCQPGYTIELNGSRVRTCTTNGTWSGVMPTCRAVTCSTPPQISNGRLEGTNFDWGFSISYICSAGYELSFPAVLTCVGNGTWSGEVPQCLPKFCGDPGIPSQGKREGKSFIYQSEVSFSCNSPFILVGSSTRLCQTDGTWSGSSPHCIEPTRTSCENPGVPRHGSQNNTFGFQVGSVVQFHCKKGHLLQGSTTRTCLPDLTWSGIQPECIPHSCKQPESPAHANVVGMDLPSHGYTLIYTCQPGFFLAGGTEHRVCRSDNTWTGKVPVCEAGSKILVKDPRPALGTPSPKLSVPDDVFAQNYIWKGSYNFKGRKQPMTLTVTSFNASTGRVNATLSNSDMELLLSGVYKSQEARLMLHIYLIKVPAHASVKKMKEENWAMDGFVSAEPDGATYVFQGFIKGKDYGQFGLQRLGLNTSEGSNSSNQPHGTNSSSVAIAILVPFFALIFAGFGFYLYKQRTAPKTQYTGCSVHENNNGQAAFENPMYDTNAKSVEGKAVRFDPNLNTVCTMV.

Over residues 1-21 the composition is skewed to basic and acidic residues; sequence MKGSRKGESRAKESKPREPGT. Residues 1–22 form a disordered region; sequence MKGSRKGESRAKESKPREPGTR. At 1–42 the chain is on the cytoplasmic side; it reads MKGSRKGESRAKESKPREPGTRRCAKCGRLDFILKKKMGIKS. A helical membrane pass occupies residues 43 to 63; the sequence is GFTFWNLVFLLTLSCVKGFIY. Residues 64-3630 are Extracellular-facing; it reads TCGGTLKGLN…NQPHGTNSSS (3567 aa). 4 disulfide bridges follow: Cys65-Cys91, Cys178-Cys218, Cys204-Cys235, and Cys241-Cys267. In terms of domain architecture, CUB 1 spans 65-173; that stretch reads CGGTLKGLNG…HGFKVYYEEL (109 aa). 2 N-linked (GlcNAc...) asparagine glycosylation sites follow: Asn73 and Asn90. One can recognise a Sushi 1 domain in the interval 176 to 237; the sequence is SSCGNPGVPP…WDFPVPICRA (62 aa). The region spanning 241–345 is the CUB 2 domain; it reads CGGTMRGSSG…RGFSAPYQGS (105 aa). The tract at residues 388–437 is disordered; that stretch reads HRLSEEQRVQVRSLSDSGLDPNTPEDQLSPHQADTQSTSRRPRNAEQIER. Residues 411–426 are compositionally biased toward polar residues; that stretch reads PEDQLSPHQADTQSTS. Residues 484–545 enclose the Sushi 2 domain; it reads NLCPDPGEPE…WSDHRPVCKV (62 aa). Cystine bridges form between Cys486/Cys526, Cys512/Cys543, Cys548/Cys574, Cys664/Cys704, Cys690/Cys717, and Cys721/Cys747. The 112-residue stretch at 548-659 folds into the CUB 3 domain; sequence CGSNLQGPSG…VGFKVNYKEI (112 aa). One can recognise a Sushi 3 domain in the interval 662–719; it reads ESCGDPGTPLYGIREGDGFSNRDVLRFECQFGFELIGEKSIVCQENNQWSANIPICIF. The region spanning 721 to 829 is the CUB 4 domain; it reads CLSNFTAPMG…RGFNITYNTF (109 aa). N-linked (GlcNAc...) asparagine glycans are attached at residues Asn724 and Asn823. A Sushi 4 domain is found at 832 to 893; the sequence is NECPDPGIPI…WSGPIPRCGA (62 aa). 3 disulfide bridges follow: Cys834-Cys875, Cys860-Cys891, and Cys895-Cys921. The CUB 5 domain occupies 895–1003; it reads CGGHFSAPSG…NGFKIHYESV (109 aa). A glycan (N-linked (GlcNAc...) asparagine) is linked at Asn966. Residues 1008-1065 enclose the Sushi 5 domain; sequence YSCLDPGIPVHGRRYGHDFSIGSTVSFSCDPGYRLSHEEPLLCEKNHWWSHPLPTCDA. 3 disulfides stabilise this stretch: Cys1010–Cys1050, Cys1036–Cys1063, and Cys1067–Cys1093. One can recognise a CUB 6 domain in the interval 1067–1177; that stretch reads CGGDVRGPSG…EGFNITFSEY (111 aa). Residues Asn1092, Asn1126, and Asn1171 are each glycosylated (N-linked (GlcNAc...) asparagine). The Sushi 6 domain occupies 1180–1239; that stretch reads EPCEDPGIPQYGSRVGFSFGVGDTLTFSCSLGYRLEGSSEIICLGGGRRVWSAPLPRCVA. Disulfide bonds link Cys1182–Cys1222, Cys1208–Cys1237, and Cys1241–Cys1267. A CUB 7 domain is found at 1241-1349; that stretch reads CGASATNNEG…EGFQLVYTSF (109 aa). Asn1280 carries an N-linked (GlcNAc...) asparagine glycan. The region spanning 1352–1412 is the Sushi 7 domain; sequence SHCEDPGIPQ…WDYPLPSCIA (61 aa). Cystine bridges form between Cys1354/Cys1395, Cys1381/Cys1410, Cys1414/Cys1441, Cys1528/Cys1568, Cys1554/Cys1584, Cys1588/Cys1614, Cys1701/Cys1741, Cys1727/Cys1758, Cys1762/Cys1788, Cys1878/Cys1918, Cys1904/Cys1935, and Cys1939/Cys1965. The 110-residue stretch at 1414 to 1523 folds into the CUB 8 domain; it reads CGGRFKGESS…SGFAIQFSSS (110 aa). One can recognise a Sushi 8 domain in the interval 1526–1586; sequence TACRDPGVPM…WQPSPPVCIA (61 aa). A glycan (N-linked (GlcNAc...) asparagine) is linked at Asn1536. A CUB 9 domain is found at 1588–1696; it reads CGGNLTGSSG…TGFHLEYKAK (109 aa). 2 N-linked (GlcNAc...) asparagine glycosylation sites follow: Asn1591 and Asn1709. The region spanning 1699-1760 is the Sushi 9 domain; sequence ESCFDPGNIM…WNRVLPSCHA (62 aa). The region spanning 1762–1870 is the CUB 10 domain; it reads CGSRSTGSEG…KGFHFVYQAV (109 aa). The N-linked (GlcNAc...) asparagine glycan is linked to Asn1781. The Sushi 10 domain occupies 1876-1937; it reads TQCSSVPEPR…WNDSLPTCIV (62 aa). An N-linked (GlcNAc...) asparagine glycan is attached at Asn1929. The 109-residue stretch at 1939–2047 folds into the CUB 11 domain; that stretch reads CGGILTKRKG…AGFHLEYTAI (109 aa). A glycan (N-linked (GlcNAc...) asparagine) is linked at Asn2019. The Sushi 11 domain occupies 2050-2109; it reads DSCPEPQTPSSGIKVGDRYMVGDVVSFQCDQGYSLQGHSHITCMPGPVRRWNYPIPICLA. Intrachain disulfides connect Cys2052-Cys2092, Cys2078-Cys2107, and Cys2111-Cys2137. The region spanning 2111–2219 is the CUB 12 domain; it reads CGGAMSDFSG…QGFHIVYQAY (109 aa). N-linked (GlcNAc...) asparagine glycosylation is present at Asn2155. Positions 2222–2281 constitute a Sushi 12 domain; sequence QSCPDPRPFRNGFVIGNDFTVGQTISFECFPGYTLIGNSALTCLHGVSRNWNHPLPRCEA. 36 cysteine pairs are disulfide-bonded: Cys2224–Cys2264, Cys2250–Cys2279, Cys2283–Cys2309, Cys2395–Cys2437, Cys2423–Cys2452, Cys2456–Cys2484, Cys2569–Cys2610, Cys2596–Cys2627, Cys2632–Cys2674, Cys2658–Cys2689, Cys2694–Cys2739, Cys2725–Cys2754, Cys2759–Cys2799, Cys2785–Cys2812, Cys2817–Cys2857, Cys2843–Cys2870, Cys2875–Cys2915, Cys2901–Cys2928, Cys2933–Cys2977, Cys2963–Cys2990, Cys2995–Cys3035, Cys3021–Cys3048, Cys3056–Cys3096, Cys3082–Cys3109, Cys3114–Cys3155, Cys3141–Cys3168, Cys3173–Cys3215, Cys3199–Cys3228, Cys3233–Cys3273, Cys3259–Cys3286, Cys3291–Cys3331, Cys3317–Cys3344, Cys3352–Cys3393, Cys3379–Cys3406, Cys3411–Cys3453, and Cys3438–Cys3466. In terms of domain architecture, CUB 13 spans 2283–2394; it reads CGGNITAMNG…LSYHAYQLRV (112 aa). 2 N-linked (GlcNAc...) asparagine glycosylation sites follow: Asn2286 and Asn2291. Residues 2393–2454 form the Sushi 13 domain; sequence RVCQPPPPVP…MDGAPPVCQV (62 aa). Residues 2456 to 2567 form the CUB 14 domain; it reads CPANELRLDS…KGFRIRYIAF (112 aa). 15 consecutive Sushi domains span residues 2567–2629, 2630–2691, 2692–2756, 2757–2814, 2815–2872, 2873–2930, 2931–2992, 2993–3050, 3054–3111, 3112–3170, 3171–3230, 3231–3288, 3289–3346, 3350–3408, and 3409–3468; these read FYCS…ACQA, ISCG…RCVV, VTCP…YCQI, ISCG…RCLA, GHCG…SCVP, VSCG…VCKV, VNCS…ECIM, IDCG…HCSG, GTCG…ECKA, VQCG…NCTI, ISCG…TCRA, VTCS…QCLP, KFCG…HCIE, TSCE…ECIP, and HSCK…VCEA. Over residues 3052 to 3065 the composition is skewed to low complexity; the sequence is TTGTCGDPGTPGHG. Positions 3052-3071 are disordered; that stretch reads TTGTCGDPGTPGHGSRQESD. The helical transmembrane segment at 3631 to 3651 threads the bilayer; the sequence is VAIAILVPFFALIFAGFGFYL. Over 3652–3707 the chain is Cytoplasmic; the sequence is YKQRTAPKTQYTGCSVHENNNGQAAFENPMYDTNAKSVEGKAVRFDPNLNTVCTMV.

This sequence belongs to the CSMD family. As to expression, expressed in the apical dendrites of postnatal hippocampal neurons (at protein level).

Its subcellular location is the cell membrane. In terms of biological role, involved in dendrite development. In Mus musculus (Mouse), this protein is CUB and sushi domain-containing protein 3 (Csmd3).